Here is a 93-residue protein sequence, read N- to C-terminus: Small ribosomal subunit protein uS19 (93 aa).

This sequence belongs to the universal ribosomal protein uS19 family.

In terms of biological role, protein S19 forms a complex with S13 that binds strongly to the 16S ribosomal RNA. This chain is Small ribosomal subunit protein uS19, found in Campylobacter fetus subsp. fetus (strain 82-40).